The primary structure comprises 80 residues: Bowman-Birk type proteinase inhibitor DE-4 (80 aa).

Over residues 1-10 (DDDHSDDEPR) the composition is skewed to acidic residues. The tract at residues 1-29 (DDDHSDDEPRESESSKPCCSSCCTRSRPP) is disordered. Residues 15–29 (SKPCCSSCCTRSRPP) show a composition bias toward low complexity. 7 disulfides stabilise this stretch: C18-C71, C19-C33, C22-C67, C23-C31, C41-C48, C45-C60, and C50-C58.

Belongs to the Bowman-Birk serine protease inhibitor family.

The polypeptide is Bowman-Birk type proteinase inhibitor DE-4 (Philenoptera violacea (Apple-leaf)).